Consider the following 183-residue polypeptide: Transcription factor 15 (183 aa).

The segment at 24-46 (DEENRSESDTSDQSYGCCEGAEA) is disordered. Positions 61-113 (KQRQAANARERDRTQSVNTAFTALRTLIPTEPVDRKLSKIETLRLASSYIAHL) constitute a bHLH domain.

In terms of assembly, heterodimer; efficient DNA binding requires dimerization with another bHLH protein.

It is found in the nucleus. In terms of biological role, early transcription factor that plays a key role in somitogenesis, paraxial mesoderm development and regulation of stem cell pluripotency. Essential for the mesenchymal to epithelial transition associated with somite formation. Required for somite morphogenesis, thereby regulating patterning of the axial skeleton and skeletal muscles. Also plays a key role in regulation of stem cell pluripotency. Promotes pluripotency exit of embryonic stem cells (ESCs) by priming ESCs for differentiation. Acts as a key regulator of self-renewal of hematopoietic stem cells (HSCs) by mediating HSCs quiescence and long-term self-renewal. Acts by forming a heterodimer with another helix-loop-helix (bHLH) protein, that binds DNA on E-box motifs (5'-CANNTG-3') and activates transcription of target genes. The sequence is that of Transcription factor 15 (TCF15) from Gallus gallus (Chicken).